Reading from the N-terminus, the 491-residue chain is METEDVTVREQIFHDRVRETIICVLLFICLYILSHFILTHFKKSAEFVTDDIEDATVNKIALWLCTFTLSVAVCAVLLLPISILSNEVLLTFPHSYYMQWLNGSLIRGLWNLVFLFSNLSLVFLMPFAYFFTESEGFAGSKKGVMARVYETAVMLLLLSLLVLGIVWVASALLHHNTARESLYDLWEYYLPYLYSGISLFGVLLLLLCTPFGLSRMFSVTGSLLVKPRLLENLEETMNCAVFEEASLSRKLKSTNTCWISAHLEALNKEFLSVQSKRITLELRKRASPWQRNLVYPVAMLLLLALTAVSVLMVCFHVLELLFDESAMPRGMEDPHLGLASFSMLGSLGAAVQVVIILYLMVSSVVGFYSSPLFTGLLPRAQDTTLTQIIGNCVSLLILSSALPVFSRTLGITKFDLLGDFGRHDWLGSFHIVFLYNMLFAGLTSACLINTVTWALQRELIRAFGLHRLPLTVSRSTIPLKLLLANGLSKIH.

Residues 1–20 are Extracellular-facing; that stretch reads METEDVTVREQIFHDRVRET. The helical transmembrane segment at 21–41 threads the bilayer; the sequence is IICVLLFICLYILSHFILTHF. At 42–59 the chain is on the cytoplasmic side; sequence KKSAEFVTDDIEDATVNK. Residues 60 to 80 form a helical membrane-spanning segment; the sequence is IALWLCTFTLSVAVCAVLLLP. The Extracellular portion of the chain corresponds to 81–111; sequence ISILSNEVLLTFPHSYYMQWLNGSLIRGLWN. The helical transmembrane segment at 112-132 threads the bilayer; sequence LVFLFSNLSLVFLMPFAYFFT. The Cytoplasmic segment spans residues 133 to 152; sequence ESEGFAGSKKGVMARVYETA. A helical transmembrane segment spans residues 153–173; it reads VMLLLLSLLVLGIVWVASALL. At 174–192 the chain is on the extracellular side; sequence HHNTARESLYDLWEYYLPY. The helical transmembrane segment at 193–213 threads the bilayer; the sequence is LYSGISLFGVLLLLLCTPFGL. Topologically, residues 214–292 are cytoplasmic; it reads SRMFSVTGSL…RKRASPWQRN (79 aa). Residues 293 to 313 traverse the membrane as a helical segment; that stretch reads LVYPVAMLLLLALTAVSVLMV. The Extracellular portion of the chain corresponds to 314–346; sequence CFHVLELLFDESAMPRGMEDPHLGLASFSMLGS. The helical transmembrane segment at 347–367 threads the bilayer; it reads LGAAVQVVIILYLMVSSVVGF. Residues 368–384 are Cytoplasmic-facing; the sequence is YSSPLFTGLLPRAQDTT. The chain crosses the membrane as a helical span at residues 385–405; it reads LTQIIGNCVSLLILSSALPVF. The Extracellular portion of the chain corresponds to 406–427; the sequence is SRTLGITKFDLLGDFGRHDWLG. The helical transmembrane segment at 428 to 448 threads the bilayer; that stretch reads SFHIVFLYNMLFAGLTSACLI. Topologically, residues 449–491 are cytoplasmic; the sequence is NTVTWALQRELIRAFGLHRLPLTVSRSTIPLKLLLANGLSKIH.

This sequence belongs to the LIMR family. Dimer. Can also form higher oligomers.

It localises to the cell membrane. Its subcellular location is the endoplasmic reticulum membrane. May play a role in lymphocyte development by negatively regulating the canonical Wnt signaling pathway. May act as a LCN1 receptor. This chain is Limb region 1 homolog-like protein (lmbr1l), found in Danio rerio (Zebrafish).